Reading from the N-terminus, the 200-residue chain is Dephospho-CoA kinase (200 aa).

Positions 4–200 constitute a DPCK domain; that stretch reads VIGLTGGIGS…QKYIKMSHLY (197 aa). Residue 12–17 coordinates ATP; it reads GSGKTT.

Belongs to the CoaE family.

It is found in the cytoplasm. It carries out the reaction 3'-dephospho-CoA + ATP = ADP + CoA + H(+). The protein operates within cofactor biosynthesis; coenzyme A biosynthesis; CoA from (R)-pantothenate: step 5/5. Its function is as follows. Catalyzes the phosphorylation of the 3'-hydroxyl group of dephosphocoenzyme A to form coenzyme A. The polypeptide is Dephospho-CoA kinase (Photobacterium profundum (strain SS9)).